The sequence spans 44 residues: MFKIFNTKFMRSAPIVAAIWISLTAGIIIEFNRFFPDLLFHPMS.

A helical transmembrane segment spans residues 9 to 29 (FMRSAPIVAAIWISLTAGIII).

The protein belongs to the PsaJ family.

The protein localises to the cellular thylakoid membrane. May help in the organization of the PsaE and PsaF subunits. The sequence is that of Photosystem I reaction center subunit IX from Prochlorococcus marinus (strain MIT 9515).